The primary structure comprises 595 residues: Beta-lactamase-like protein ARB_00930 (595 aa).

Residues 1-18 form the signal peptide; the sequence is MVVCFLWLLLPYAATTLS. Asparagine 70 and asparagine 102 each carry an N-linked (GlcNAc...) asparagine glycan. Serine 117 (acyl-ester intermediate) is an active-site residue. 3 N-linked (GlcNAc...) asparagine glycosylation sites follow: asparagine 147, asparagine 156, and asparagine 195. Tyrosine 235 serves as the catalytic Proton acceptor. N-linked (GlcNAc...) asparagine glycans are attached at residues asparagine 249, asparagine 461, and asparagine 473.

Belongs to the beta-lactamase family.

Its subcellular location is the secreted. It catalyses the reaction a beta-lactam + H2O = a substituted beta-amino acid. This Arthroderma benhamiae (strain ATCC MYA-4681 / CBS 112371) (Trichophyton mentagrophytes) protein is Beta-lactamase-like protein ARB_00930.